A 141-amino-acid chain; its full sequence is Hemoglobin subunit alpha (141 aa).

In terms of domain architecture, Globin spans 1 to 141; sequence VLSPDDKKHV…VSTVLTSKYR (141 aa). At Ser3 the chain carries Phosphoserine. N6-succinyllysine is present on residues Lys7 and Lys11. Lys16 bears the N6-acetyllysine; alternate mark. Position 16 is an N6-succinyllysine; alternate (Lys16). The residue at position 24 (Tyr24) is a Phosphotyrosine. Ser35 bears the Phosphoserine mark. N6-succinyllysine is present on Lys40. Ser49 carries the phosphoserine modification. His58 is an O2 binding site. His87 provides a ligand contact to heme b. Ser102 is subject to Phosphoserine. Thr108 bears the Phosphothreonine mark. A phosphoserine mark is found at Ser124 and Ser131. Phosphothreonine is present on residues Thr134 and Thr137. Ser138 carries the post-translational modification Phosphoserine.

It belongs to the globin family. As to quaternary structure, heterotetramer of two alpha chains and two beta chains. In terms of tissue distribution, red blood cells.

Involved in oxygen transport from the lung to the various peripheral tissues. Functionally, hemopressin acts as an antagonist peptide of the cannabinoid receptor CNR1. Hemopressin-binding efficiently blocks cannabinoid receptor CNR1 and subsequent signaling. In Cercocebus atys (Sooty mangabey), this protein is Hemoglobin subunit alpha (HBA).